The following is a 289-amino-acid chain: ATP synthase gamma chain (289 aa).

It belongs to the ATPase gamma chain family. F-type ATPases have 2 components, CF(1) - the catalytic core - and CF(0) - the membrane proton channel. CF(1) has five subunits: alpha(3), beta(3), gamma(1), delta(1), epsilon(1). CF(0) has three main subunits: a, b and c.

The protein localises to the cell inner membrane. In terms of biological role, produces ATP from ADP in the presence of a proton gradient across the membrane. The gamma chain is believed to be important in regulating ATPase activity and the flow of protons through the CF(0) complex. This Actinobacillus succinogenes (strain ATCC 55618 / DSM 22257 / CCUG 43843 / 130Z) protein is ATP synthase gamma chain.